A 206-amino-acid polypeptide reads, in one-letter code: MAVRSKSSKAWLHEHVNDHYVHMAQKDGYRARAAYKLLEINEKDKLIKPGTVLADLGSAPGSWSQVAAKLTGTSGAVFALDILPMEAIGGVSFIQGDFRENDVLAQFETLLDNRPLDLVICDMAPNMSGNAVSDQARSFYLCELALDFASQHLKTGGSFLVKVFQGAGYQEYMAAMREIFGTVQTRKPEASRNRSSEIYLLGKNKR.

Positions 61, 63, 81, 97, and 122 each coordinate S-adenosyl-L-methionine. The Proton acceptor role is filled by Lys162.

This sequence belongs to the class I-like SAM-binding methyltransferase superfamily. RNA methyltransferase RlmE family.

The protein resides in the cytoplasm. The enzyme catalyses uridine(2552) in 23S rRNA + S-adenosyl-L-methionine = 2'-O-methyluridine(2552) in 23S rRNA + S-adenosyl-L-homocysteine + H(+). In terms of biological role, specifically methylates the uridine in position 2552 of 23S rRNA at the 2'-O position of the ribose in the fully assembled 50S ribosomal subunit. The chain is Ribosomal RNA large subunit methyltransferase E from Neisseria meningitidis serogroup C (strain 053442).